The primary structure comprises 612 residues: Bifunctional 6(G)-fructosyltransferase/2,1-fructan:2,1-fructan 1-fructosyltransferase (612 aa).

Residues 1–24 (MDAQDIESRHPLIGARPRRRALRS) lie on the Cytoplasmic side of the membrane. A helical; Signal-anchor for type II membrane protein transmembrane segment spans residues 25 to 45 (LSILLAAALLLGLVLFYANGT). The Vacuolar segment spans residues 46–612 (GSGTAVDPVR…NSTYNDFYHF (567 aa)). Residues 82-85 (YMND), glutamine 101, and tryptophan 109 contribute to the substrate site. Aspartate 85 is an active-site residue. N-linked (GlcNAc...) asparagine glycosylation is present at asparagine 111. Substrate is bound by residues 144-145 (WT) and 208-209 (RD). 2 N-linked (GlcNAc...) asparagine glycosylation sites follow: asparagine 216 and asparagine 230. Position 267 (glutamate 267) interacts with substrate. Residue asparagine 465 is glycosylated (N-linked (GlcNAc...) asparagine). Cysteine 466 and cysteine 514 are disulfide-bonded. 2 N-linked (GlcNAc...) asparagine glycosylation sites follow: asparagine 586 and asparagine 603.

This sequence belongs to the glycosyl hydrolase 32 family. Post-translationally, might be processed in two N-terminal and C-terminal proteolytic fragments.

The protein resides in the vacuole membrane. It carries out the reaction [1-beta-D-fructofuranosyl-(2-&gt;1)-]m+1 alpha-D-glucopyranoside + [1-beta-D-fructofuranosyl-(2-&gt;1)-]n+1 alpha-D-glucopyranoside = [1-beta-D-fructofuranosyl-(2-&gt;1)-]m alpha-D-glucopyranoside + [1-beta-D-fructofuranosyl-(2-&gt;1)-]n+1 beta-D-fructofuranosyl-(2-&gt;6)-alpha-D-glucopyranoside (m &gt; 0, n &gt;= 0).. It catalyses the reaction [beta-D-fructosyl-(2-&gt;1)-]m + [beta-D-fructosyl-(2-&gt;1)-]n = [beta-D-fructosyl-(2-&gt;1)-]m-1 + [beta-D-fructosyl-(2-&gt;1)-]n+1.. Its function is as follows. Involved in the synthesis of fructan of the inulin neoseries. Catalyzes a self-transfer between identical oligosaccharides of the 1-kestose series. This is Bifunctional 6(G)-fructosyltransferase/2,1-fructan:2,1-fructan 1-fructosyltransferase from Allium cepa (Onion).